The chain runs to 275 residues: Light-independent protochlorophyllide reductase iron-sulfur ATP-binding protein (275 aa).

ATP-binding positions include 12–17 and Lys41; that span reads GIGKST. Residue Ser16 coordinates Mg(2+). Cys97 and Cys131 together coordinate [4Fe-4S] cluster. 182-183 is an ATP binding site; it reads NR.

This sequence belongs to the NifH/BchL/ChlL family. In terms of assembly, homodimer. Protochlorophyllide reductase is composed of three subunits; BchL, BchN and BchB. Requires [4Fe-4S] cluster as cofactor.

The enzyme catalyses chlorophyllide a + oxidized 2[4Fe-4S]-[ferredoxin] + 2 ADP + 2 phosphate = protochlorophyllide a + reduced 2[4Fe-4S]-[ferredoxin] + 2 ATP + 2 H2O. It participates in porphyrin-containing compound metabolism; bacteriochlorophyll biosynthesis (light-independent). In terms of biological role, component of the dark-operative protochlorophyllide reductase (DPOR) that uses Mg-ATP and reduced ferredoxin to reduce ring D of protochlorophyllide (Pchlide) to form chlorophyllide a (Chlide). This reaction is light-independent. The L component serves as a unique electron donor to the NB-component of the complex, and binds Mg-ATP. The chain is Light-independent protochlorophyllide reductase iron-sulfur ATP-binding protein from Chlorobium phaeobacteroides (strain DSM 266 / SMG 266 / 2430).